Consider the following 546-residue polypeptide: ATP synthase F(1) complex catalytic subunit beta, mitochondrial (546 aa).

The transit peptide at 1-45 (MLGFVGRVAATSASGALRGLGPSPLPQVKVLLRASPAALQSARDY) directs the protein to the mitochondrion. 3 positions are modified to N6-acetyllysine; alternate: Lys-123, Lys-132, and Lys-160. N6-succinyllysine; alternate is present on residues Lys-123, Lys-132, and Lys-160. Lys-197 carries the post-translational modification N6-acetyllysine. Gly-208, Val-209, Gly-210, Lys-211, Thr-212, and Val-213 together coordinate ADP. Gly-208 lines the ATP pocket. Phosphate is bound by residues Gly-208, Val-209, Gly-210, Lys-211, and Thr-212. The ATP site is built by Gly-210, Lys-211, Thr-212, and Val-213. Mg(2+) is bound at residue Thr-212. Glu-237 is a binding site for Mg(2+). Arg-238 provides a ligand contact to ATP. N6-acetyllysine; alternate is present on residues Lys-258 and Lys-263. An N6-succinyllysine; alternate mark is found at Lys-258 and Lys-263. Phosphothreonine is present on Thr-311. Lys-425 is subject to N6-acetyllysine. The residue at position 432 (Ser-432) is a Phosphoserine. An N6-acetyllysine mark is found at Lys-479 and Lys-484. Lys-521 is modified (N6-acetyllysine; alternate). Lys-521 is subject to N6-succinyllysine; alternate. The segment at 521 to 546 (KLAEEHSATQTSPSPKGAAAXXXRVV) is disordered.

It belongs to the ATPase alpha/beta chains family. As to quaternary structure, homotrimer. Component of the ATP synthase complex composed at least of ATP5F1A/subunit alpha, ATP5F1B/subunit beta, ATP5MC1/subunit c (homooctomer), MT-ATP6/subunit a, MT-ATP8/subunit 8, ATP5ME/subunit e, ATP5MF/subunit f, ATP5MG/subunit g, ATP5MK/subunit k, ATP5MJ/subunit j, ATP5F1C/subunit gamma, ATP5F1D/subunit delta, ATP5F1E/subunit epsilon, ATP5PF/subunit F6, ATP5PB/subunit b, ATP5PD/subunit d, ATP5PO/subunit OSCP. ATP synthase complex consists of a soluble F(1) head domain (subunits alpha(3) and beta(3)) - the catalytic core - and a membrane F(0) domain - the membrane proton channel (subunits c, a, 8, e, f, g, k and j). These two domains are linked by a central stalk (subunits gamma, delta, and epsilon) rotating inside the F1 region and a stationary peripheral stalk (subunits F6, b, d, and OSCP). Interacts with PPIF. Interacts with BCL2L1 isoform BCL-X(L); the interaction mediates the association of BCL2L1 isoform BCL-X(L) with the mitochondrial membrane F(1)F(0) ATP synthase and enhances neurons metabolic efficiency. Interacts with CLN5 and PPT1. Interacts with S100A1; this interaction increases F1-ATPase activity. Interacts with MTLN. Interacts with TTC5/STRAP; the interaction results in decreased mitochondrial ATP production.

The protein localises to the mitochondrion inner membrane. The enzyme catalyses ATP + H2O + 4 H(+)(in) = ADP + phosphate + 5 H(+)(out). Its function is as follows. Catalytic subunit beta, of the mitochondrial membrane ATP synthase complex (F(1)F(0) ATP synthase or Complex V) that produces ATP from ADP in the presence of a proton gradient across the membrane which is generated by electron transport complexes of the respiratory chain. ATP synthase complex consist of a soluble F(1) head domain - the catalytic core - and a membrane F(1) domain - the membrane proton channel. These two domains are linked by a central stalk rotating inside the F(1) region and a stationary peripheral stalk. During catalysis, ATP synthesis in the catalytic domain of F(1) is coupled via a rotary mechanism of the central stalk subunits to proton translocation. In vivo, can only synthesize ATP although its ATP hydrolase activity can be activated artificially in vitro. With the subunit alpha (ATP5F1A), forms the catalytic core in the F(1) domain. This chain is ATP synthase F(1) complex catalytic subunit beta, mitochondrial, found in Canis lupus familiaris (Dog).